Reading from the N-terminus, the 682-residue chain is Heat shock 70 kDa protein 9, mitochondrial (682 aa).

A mitochondrion-targeting transit peptide spans 1–46 (MASVALLRSFRRREVQMASVSAFKSVSANGKNSMFGKLGYLARPFC). Residues 640–682 (SKIGEHMSKGSGSSGSDGSSGEGTSGTEQTPEAEFEEASGSRK) form a disordered region. Residues 651–663 (GSSGSDGSSGEGT) show a composition bias toward gly residues.

The protein belongs to the heat shock protein 70 (TC 1.A.33) family. DnaK subfamily. As to quaternary structure, interacts with HSCB.

It is found in the mitochondrion. The protein resides in the cytoplasm. It localises to the cytosol. Functionally, chaperone involved in the maturation of iron-sulfur [Fe-S] cluster-containing proteins. Has a low intrinsic ATPase activity which is markedly stimulated by HSCB and ISU1. In cooperation with other chaperones, Hsp70s are key components that facilitate folding of de novo synthesized proteins, assist translocation of precursor proteins into organelles, and are responsible for degradation of damaged protein under stress conditions. The polypeptide is Heat shock 70 kDa protein 9, mitochondrial (Arabidopsis thaliana (Mouse-ear cress)).